We begin with the raw amino-acid sequence, 75 residues long: MGGFSIWHWLIVLVIVLLVFGTKRLTSGAKDLGSAVKEFKKGMHDDDKPAGKLGDDSRTAEQAREAQAERDRDAR.

Residues 1-21 (MGGFSIWHWLIVLVIVLLVFG) traverse the membrane as a helical segment. Positions 41–75 (KGMHDDDKPAGKLGDDSRTAEQAREAQAERDRDAR) are disordered.

Belongs to the TatA/E family. The Tat system comprises two distinct complexes: a TatABC complex, containing multiple copies of TatA, TatB and TatC subunits, and a separate TatA complex, containing only TatA subunits. Substrates initially bind to the TatABC complex, which probably triggers association of the separate TatA complex to form the active translocon.

The protein resides in the cell inner membrane. Functionally, part of the twin-arginine translocation (Tat) system that transports large folded proteins containing a characteristic twin-arginine motif in their signal peptide across membranes. TatA could form the protein-conducting channel of the Tat system. This is Sec-independent protein translocase protein TatA from Xanthomonas axonopodis pv. citri (strain 306).